A 137-amino-acid polypeptide reads, in one-letter code: 2-iminobutanoate/2-iminopropanoate deaminase (137 aa).

At Ser2 the chain carries N-acetylserine. 2 positions are modified to N6-succinyllysine: Lys13 and Lys67. Thr74 is subject to Phosphothreonine. Position 136 is a phosphoserine (Ser136).

Homotrimer. Interacts with YTHDF2. In terms of tissue distribution, expressed by various malignant neoplasms.

Its subcellular location is the cytoplasm. It localises to the nucleus. The protein localises to the peroxisome. The protein resides in the mitochondrion. The enzyme catalyses 2-iminobutanoate + H2O = 2-oxobutanoate + NH4(+). It catalyses the reaction 2-iminopropanoate + H2O = pyruvate + NH4(+). Its function is as follows. Catalyzes the hydrolytic deamination of enamine/imine intermediates that form during the course of normal metabolism. May facilitate the release of ammonia from these potentially toxic reactive metabolites, reducing their impact on cellular components. It may act on enamine/imine intermediates formed by several types of pyridoxal-5'-phosphate-dependent dehydratases including L-threonine dehydratase. In terms of biological role, also promotes endoribonucleolytic cleavage of some transcripts by promoting recruitment of the ribonuclease P/MRP complex. Acts by bridging YTHDF2 and the ribonuclease P/MRP complex. RIDA/HRSP12 binds to N6-methyladenosine (m6A)-containing mRNAs containing a 5'-GGUUC-3' motif: cooperative binding of RIDA/HRSP12 and YTHDF2 to such transcripts lead to recruitment of the ribonuclease P/MRP complex and subsequent endoribonucleolytic cleavage. The protein is 2-iminobutanoate/2-iminopropanoate deaminase of Capra hircus (Goat).